The sequence spans 661 residues: Fusaric acid cluster transcription factor FUB12 (661 aa).

The segment at residues 17–48 (CVPCRTRKIKCNAAVVGLPCGSCVSRECPDEC) is a DNA-binding region (zn(2)-C6 fungal-type). Disordered regions lie at residues 56–132 (RTVK…PPGQ) and 151–184 (SAAQTDASDHQSNDEPDDSFNSQIHHWNPPPQLD). Over residues 73-98 (PDTNGSVLSPRQQQLPTNVSRQATDS) the composition is skewed to polar residues. Basic and acidic residues predominate over residues 99–109 (SHSDPVEESIH). The span at 110 to 119 (ASHTGSSLRN) shows a compositional bias: polar residues. Residues 120–129 (DTPHSRDRRP) show a composition bias toward basic and acidic residues.

The protein resides in the nucleus. Its function is as follows. Transcription factor that is involved in the formation of the two Fusaric acid derivatives, dehydrofusaric acid and fusarinolic acid, serving as a detoxification mechanism. This chain is Fusaric acid cluster transcription factor FUB12, found in Gibberella moniliformis (strain M3125 / FGSC 7600) (Maize ear and stalk rot fungus).